Consider the following 287-residue polypeptide: Damage-control phosphatase PH1575 (287 aa).

A Subfamily I CxxC motif motif is present at residues 7–10 (CLTC). 3 residues coordinate Mn(2+): Asp156, Asn157, and Asp191. The short motif at 243–246 (GNFE) is the Subfamily I GNFE motif element. Residues 263–264 (KC) carry the Subfamily I KC motif motif.

This sequence belongs to the damage-control phosphatase family. Nucleotides phosphatase I subfamily. The cofactor is Mn(2+). Requires Ni(2+) as cofactor. It depends on [2Fe-2S] cluster as a cofactor.

Activity is strongly promoted by Co(2+), Ni(2+), Mg(2+), Mn(2+), Ca(2+), Zn(2+) and Cu(2+). Activity is inhibited by EDTA. Functionally, metal-dependent phosphatase with probable damage-control functions. Shows phosphatase activity against p-nitrophenyl phosphate (pNPP), but natural substrates have not been identified yet. Low phosphatase activity against 8-oxo nucleotides suggests that it could hydrolyze oxidatively damaged purine nucleotides or their biosynthetic intermediates. In Pyrococcus horikoshii (strain ATCC 700860 / DSM 12428 / JCM 9974 / NBRC 100139 / OT-3), this protein is Damage-control phosphatase PH1575.